Here is a 456-residue protein sequence, read N- to C-terminus: MGQSMSCGSRPEHGIFASVQCGDIITIRRVMATEPSLLNQTTPYDRHSVLHVAAANGQIEILSLLLERFTNPDLLNRHKQTPLMLAAMYGRISCVKKLAEVGANILMFDSVNRRTCLHYAAYYGHANCVQAILSAAQSSPVAVHWGYARFVNIRDDKGATPLHLAARQRRPECVNVLLDSGSLVCASTSVYGSPGSTPLHLAARSGSIDCVRKLLAWGADRLQRDASGRIPYVVAMKHKHGACGALLNPSSAEPLVWPSPLKFISELNDEAKLLLEQALMEANREREKTILKGTAYSLPSPSFSDTDDNMSEVSDTELCCICFEQVCTIEVKDCGHQMCAQCTLALCCHNKPNPTTSTVTPPVCPFCRSTIACLVVAQNNNNNNEKSKSLDDVVVVDREAGDVSSSKFRKHRRSINLGEESSSFMGLSTIGSFGRITGRGSGRIAAENELMDKPIL.

ANK repeat units follow at residues 45-74 (DRHS…NPDL), 78-107 (HKQT…NILM), 112-141 (NRRT…SSPV), 157-186 (KGAT…LVCA), and 194-224 (PGST…RLQR). The RING-type zinc-finger motif lies at 319 to 368 (CCICFEQVCTIEVKDCGHQMCAQCTLALCCHNKPNPTTSTVTPPVCPFCR).

It catalyses the reaction S-ubiquitinyl-[E2 ubiquitin-conjugating enzyme]-L-cysteine + [acceptor protein]-L-lysine = [E2 ubiquitin-conjugating enzyme]-L-cysteine + N(6)-ubiquitinyl-[acceptor protein]-L-lysine.. It participates in protein modification; protein ubiquitination. Functionally, no E3 ubiquitin-protein ligase activity observed when associated with the E2 enzyme UBC8 in vitro. The protein is Putative E3 ubiquitin-protein ligase XBAT31 (XBAT31) of Arabidopsis thaliana (Mouse-ear cress).